A 259-amino-acid chain; its full sequence is Peroxiredoxin-4 (259 aa).

Residues 66–224 (IRIRKPAPAF…AIRTLKALKF (159 aa)) enclose the Thioredoxin domain. Cys-111 functions as the Cysteine sulfenic acid (-SOH) intermediate in the catalytic mechanism.

Belongs to the peroxiredoxin family. AhpC/Prx1 subfamily. As to quaternary structure, homodimer; disulfide-linked, upon oxidation. 5 homodimers assemble to form a ring-like decamer.

It localises to the cytoplasm. It is found in the endoplasmic reticulum. It catalyses the reaction a hydroperoxide + [thioredoxin]-dithiol = an alcohol + [thioredoxin]-disulfide + H2O. Functionally, thiol-specific peroxidase that catalyzes the reduction of hydrogen peroxide and organic hydroperoxides to water and alcohols, respectively. Plays a role in cell protection against oxidative stress by detoxifying peroxides and as sensor of hydrogen peroxide-mediated signaling events. Regulates the activation of NF-kappa-B in the cytosol by a modulation of I-kappa-B-alpha phosphorylation. The polypeptide is Peroxiredoxin-4 (prdx4) (Dictyostelium discoideum (Social amoeba)).